Here is a 693-residue protein sequence, read N- to C-terminus: TGF-beta-activated kinase 1 and MAP3K7-binding protein 2 (693 aa).

The 44-residue stretch at 8-51 folds into the CUE domain; that stretch reads IDFQVLHDLRQKFPEVPEVVVSRCMLQNNNNLDACCAVLSQEST. The segment at 91 to 130 is disordered; it reads GREGSRMNGSRTLTHSISDGQLQGGQSNSELFQQEPQTAP. A compositionally biased stretch (polar residues) spans 97-130; the sequence is MNGSRTLTHSISDGQLQGGQSNSELFQQEPQTAP. Arginine 173 bears the Asymmetric dimethylarginine mark. The tract at residues 219–310 is disordered; the sequence is ITTPGGTTRQ…SGSSQSSAHS (92 aa). The span at 220 to 231 shows a compositional bias: low complexity; it reads TTPGGTTRQTQQ. Residues 232-282 are compositionally biased toward polar residues; that stretch reads HSGWVSQFNPMNPQQVYQPSQPGPWTTCPASNPLSHTSSQQPNQQGHQTSH. Positions 286–310 are enriched in low complexity; it reads PISSPTTSQPPTIHSSGSSQSSAHS. Lysine 329 is covalently cross-linked (Glycyl lysine isopeptide (Lys-Gly) (interchain with G-Cter in SUMO)). The disordered stretch occupies residues 330–381; that stretch reads LEPPQRNNSSKLRSSGPRTSSTSSSVNSQTLNRNQPTVYIAASPPNTDELMS. Residues 343-359 are compositionally biased toward low complexity; it reads SSGPRTSSTSSSVNSQT. Phosphoserine is present on residues serine 372, serine 450, serine 482, and serine 524. Residues 532–619 adopt a coiled-coil conformation; it reads YTQALLVHQK…TKEIDLFQAR (88 aa). A Glycyl lysine isopeptide (Lys-Gly) (interchain with G-Cter in SUMO) cross-link involves residue lysine 562. At serine 582 the chain carries Phosphoserine. A Glycyl lysine isopeptide (Lys-Gly) (interchain with G-Cter in ubiquitin) cross-link involves residue lysine 611. Residues 642–663 form a disordered region; sequence PPKPKDQRSIIKTPKTQDTEDD. The RanBP2-type zinc-finger motif lies at 663 to 693; sequence DEGAQWNCTACTFLNHPALIRCEQCEMPRHF. A (Microbial infection) S-methylcysteine modification is found at cysteine 673. The interval 675-685 is interaction with polyubiquitin; it reads FLNHPALIRCE.

In terms of assembly, interacts with MAP3K7 and TRAF6. Identified in the TRIKA2 complex composed of MAP3K7, TAB1 and TAB2. Binds 'Lys-63'-linked polyubiquitin chains. Interacts with NCOR1 and HDAC3 to form a ternary complex. Interacts (via C-terminal) with NUMBL (via PTB domain). Interacts (via the C-terminus) with DYNC2I2 (via WD domains). Interacts with RBCK1. Interacts with TRIM5. Interacts with TRIM38 (via B30.2/SPRY domain), leading to its translocation to lysosomes and degradation. Interacts with ASB1; this interaction promotes TAB2 stability. Degraded in a lysosome-dependent manner following interaction with TRIM38. Post-translationally, SUMOylated by TRIM60; leading to inhibition of MAPK/NF-kappaB activation and the innate immune response. In terms of processing, ubiquitinated; following IL1 stimulation or TRAF6 overexpression. Ubiquitination involves RBCK1 leading to proteasomal degradation. Ubiquitinated at Lys-611 by TRIM45 leading to proteasomal degradation. Phosphorylated. Post-translationally, (Microbial infection) Methylated at Cys-673 by enteropathogenic E.coli protein NleE or S.flexneri protein OspZ: methylation disrupts zinc-binding and ability to bind 'Lys-63'-linked ubiquitin, leading to NF-kappa-B inactivation. Widely expressed. In the embryo, expressed in the ventricular trabeculae, endothelial cells of the conotruncal cushions of the outflow tract and in the endothelial cells lining the developing aortic valves.

It localises to the membrane. It is found in the endosome membrane. The protein localises to the lysosome membrane. Its subcellular location is the cytoplasm. The protein resides in the cytosol. In terms of biological role, adapter required to activate the JNK and NF-kappa-B signaling pathways through the specific recognition of 'Lys-63'-linked polyubiquitin chains by its RanBP2-type zinc finger (NZF). Acts as an adapter linking MAP3K7/TAK1 and TRAF6 to 'Lys-63'-linked polyubiquitin chains. The RanBP2-type zinc finger (NZF) specifically recognizes Lys-63'-linked polyubiquitin chains unanchored or anchored to the substrate proteins such as RIPK1/RIP1 and RIPK2: this acts as a scaffold to organize a large signaling complex to promote autophosphorylation of MAP3K7/TAK1, and subsequent activation of I-kappa-B-kinase (IKK) core complex by MAP3K7/TAK1. Also recognizes and binds Lys-63'-linked polyubiquitin chains of heterotypic 'Lys-63'-/'Lys-48'-linked branched ubiquitin chains. Regulates the IL1-mediated translocation of NCOR1 out of the nucleus. Involved in heart development. The chain is TGF-beta-activated kinase 1 and MAP3K7-binding protein 2 from Homo sapiens (Human).